The sequence spans 701 residues: Protein UL29/UL28 (701 aa).

The segment at 1-33 (MSGRRKGCSAATASSSSSSPPSRLPPLPGHARR) is disordered.

Belongs to the herpesviridae US22 family. Interacts with UL38 and host HDAC1; these interactions are necessary for the HDAC1 interaction with UL38. Interacts with host MTA2.

Its subcellular location is the virion. The protein localises to the host nucleus. The protein resides in the host cytoplasm. Contributes to activation of immediate-early gene expression. This Homo sapiens (Human) protein is Protein UL29/UL28 (UL29).